The sequence spans 520 residues: MDRKAGEDDWEDSGAETGGSDYSRLSSTSSELSVDDTQDPFLVSIHVITDPGESRCLQEAIDRLLAWIHPDLQLFRVSERRVSKKRKPVKSFVSHPALAIILFLQEAYGEDQILHLHKCFQKPPWQFHHTERVHGKFLPYMPCNQDFFTLANGTPLWAIRQVHYGKEIIRFTIYCSYENFADMMKMYELILKKRVWRKKTDFCVFPVYSNMDFDIEFSLKRLAKGQKPVPLESSLLEFRVRDFGQLIPLLPNQCSPISEGRWKTEDHDGNKILLQQAQCLARKTTWKHQNYLSRNPAMTQPLSIAPRNRKFKSGKHKGRAGNGQVQHFGGSQMDFPRGQTDTLRSLKVPSESVQPFQRSKSLYCLPTTSDFPSCDSFPISETHLCFGQETYETPVWRSSPRINIDDLEGVEETDVDTGMKLSSSDLSVISAYSPLNGLCSDLEASLPSHGALSHSNTLPYDSLHSLSHISSSSCSVFPSATGASTLTQAHILGHYHQSSETTSHLSETLNVQEEEEEFYI.

Disordered regions lie at residues 1-34 and 311-334; these read MDRK…ELSV and FKSG…SQMD. The segment covering 20-32 has biased composition (low complexity); sequence SDYSRLSSTSSEL.

The protein belongs to the FAM124 family.

The protein is Protein FAM124A (fam124a) of Xenopus laevis (African clawed frog).